The sequence spans 471 residues: Adenosylhomocysteinase (471 aa).

Substrate-binding residues include Thr-60, Asp-135, and Glu-196. 197–199 (TTT) is an NAD(+) binding site. Substrate contacts are provided by Lys-226 and Asp-230. NAD(+) is bound by residues Asn-231, 260 to 265 (GYGDVG), Glu-283, Asn-318, 339 to 341 (IGH), and Asn-387.

It belongs to the adenosylhomocysteinase family. Requires NAD(+) as cofactor.

It is found in the cytoplasm. It catalyses the reaction S-adenosyl-L-homocysteine + H2O = L-homocysteine + adenosine. The protein operates within amino-acid biosynthesis; L-homocysteine biosynthesis; L-homocysteine from S-adenosyl-L-homocysteine: step 1/1. In terms of biological role, may play a key role in the regulation of the intracellular concentration of adenosylhomocysteine. In Chlorobium phaeobacteroides (strain DSM 266 / SMG 266 / 2430), this protein is Adenosylhomocysteinase.